A 522-amino-acid polypeptide reads, in one-letter code: F-box/LRR-repeat protein 16 (522 aa).

One can recognise an F-box domain in the interval 38-84; the sequence is YDFTANLPDDCLAHIFQFLSAGDRKRCSLVSKRWLLVDGQNRHRLSL. LRR repeat units follow at residues 115–140, 141–166, 169–191, 266–290, 291–316, 319–344, 348–369, 370–393, 395–420, and 421–447; these read SFSL…KLRG, CREI…SCGS, FGAK…SLKR, RLQV…HIVK, TPDC…HIDG, VKRI…VLIG, TYMS…ALCG, SGTI…KFCI, GCLI…KVKK, and CSLV…DDDE.

The protein is F-box/LRR-repeat protein 16 (FBL16) of Arabidopsis thaliana (Mouse-ear cress).